The sequence spans 370 residues: Protein rough sheath 2 (370 aa).

HTH myb-type domains are found at residues 1-53 (MKER…KNYL) and 54-108 (RPGI…EKQQ). 2 consecutive DNA-binding regions (H-T-H motif) follow at residues 27 to 53 (WHLV…KNYL) and 81 to 104 (WKKI…EVFK). The segment at 107–129 (QQRELRDSRRPPPEPSPDERGRY) is disordered. Residues 276-340 (KRVEQQLEME…QVKEEKMAEQ (65 aa)) are a coiled coil.

Homodimer. Interacts with AS2, WRKY1, HIRA, a probable histone chaperone, and RIK, a predicted RNA binding protein. As to expression, expressed in lateral organ promordia.

The protein localises to the nucleus. Transcription factor required for normal cell differentiation. Interacts directly with asymmetric leaves 2 (AS2) to repress the knox homeobox genes. This Zea mays (Maize) protein is Protein rough sheath 2 (RS2).